The chain runs to 475 residues: Glycogen synthase (475 aa).

Lys15 provides a ligand contact to ADP-alpha-D-glucose.

Belongs to the glycosyltransferase 1 family. Bacterial/plant glycogen synthase subfamily.

It catalyses the reaction [(1-&gt;4)-alpha-D-glucosyl](n) + ADP-alpha-D-glucose = [(1-&gt;4)-alpha-D-glucosyl](n+1) + ADP + H(+). It functions in the pathway glycan biosynthesis; glycogen biosynthesis. Functionally, synthesizes alpha-1,4-glucan chains using ADP-glucose. This is Glycogen synthase from Anaeromyxobacter dehalogenans (strain 2CP-C).